A 138-amino-acid chain; its full sequence is Large ribosomal subunit protein uL16 (138 aa).

It belongs to the universal ribosomal protein uL16 family. As to quaternary structure, part of the 50S ribosomal subunit.

Its function is as follows. Binds 23S rRNA and is also seen to make contacts with the A and possibly P site tRNAs. The protein is Large ribosomal subunit protein uL16 of Ureaplasma parvum serovar 3 (strain ATCC 27815 / 27 / NCTC 11736).